The primary structure comprises 372 residues: Stress-activated protein kinase JNK (372 aa).

Positions 24–320 constitute a Protein kinase domain; sequence YINLRPIGSG…VDEALKHEYI (297 aa). ATP is bound by residues 31–36 and K53; that span reads GSGAQG. Residue D149 is the Proton acceptor of the active site. A Phosphothreonine modification is found at T181. Positions 181–183 match the TXY motif; sequence TPY. Residue Y183 is modified to Phosphotyrosine.

Belongs to the protein kinase superfamily. CMGC Ser/Thr protein kinase family. MAP kinase subfamily. Interacts with MKP-4 (via tyrosine-protein phosphatase domain); the interaction dephosphorylates bsk. The cofactor is Mg(2+). Post-translationally, dually phosphorylated on Thr-181 and Tyr-183, which activates the enzyme. In terms of tissue distribution, during gastrulation, expression is seen in cells undergoing morphogenetic movements. By stage 9 of embryonic development, expression is ubiquitous. At stages 12-14, expression occurs in epidermis and central nervous system. At stage 15, expression is restricted to ventral nerve cord, brain and some peripheral neurons. In larvae, expression is seen in all imaginal disks, with highest levels in wing and eye disks, and in the CNS. Adults express the protein in fat body and hemocytes.

It is found in the nucleus. The protein localises to the cytoplasm. The catalysed reaction is L-seryl-[protein] + ATP = O-phospho-L-seryl-[protein] + ADP + H(+). The enzyme catalyses L-threonyl-[protein] + ATP = O-phospho-L-threonyl-[protein] + ADP + H(+). Its activity is regulated as follows. Activated by threonine and tyrosine phosphorylation by the dual specificity kinase, hep. Inhibited by dual specificity phosphatase, puckered. In terms of biological role, mitogen-activated protein kinase and key component of the c-Jun N-terminal kinase (JNK) pathway which phosphorylate and activate transcription factors involved in a wide range of biological processes including response to various stresses, cellular proliferation, differentiation and migration, and regulation of cell shape. Responds to activation by environmental stress by phosphorylating a number of transcription factors, primarily components of AP-1 such as Jra and also the transcriptional repressor aop, and thus regulates transcriptional activity. Component of the immune response activated by bacterial infection, and is involved in wound healing and in dorsal closure, a morphogenetic movement during embryogenesis. Functions in the systematic response to wounding acting downstream of the Hayan-phenoloxidase PPO1 cascade. During epidermal wound healing involved in cellular polarization by inducing the translocation of sktl and mys/integrin beta to the trailing edge. Exhibits cytoprotective activity in neuronal cells in response to wounding to the integument. Controls the expression of a phosphatase, puckered, at the edges of wounded epidermal tissue and in the dorsal epithelium during dorsal closure. Regulates the activity of SREBP in neurons and thereby the accumulation of lipids in glia. Plays a role in positively regulating the expression of DIP2 independently of AP-1, thereby ensuring proper axon guidance in mushroom bodies. In enterocytes and differentiating progenitors of the gut that are experiencing inorganic phosphate (Pi) deficiency, activated by Cka to induce nearby progenitor cells to proliferate and form new absorptive cells, probably helping the organism to cope with the nutrient deficiency by maximizing absorption of dietary Pi. This is Stress-activated protein kinase JNK from Drosophila melanogaster (Fruit fly).